Here is a 156-residue protein sequence, read N- to C-terminus: Small ribosomal subunit protein uS7 (156 aa).

The protein belongs to the universal ribosomal protein uS7 family. Part of the 30S ribosomal subunit. Contacts proteins S9 and S11.

One of the primary rRNA binding proteins, it binds directly to 16S rRNA where it nucleates assembly of the head domain of the 30S subunit. Is located at the subunit interface close to the decoding center, probably blocks exit of the E-site tRNA. In Magnetococcus marinus (strain ATCC BAA-1437 / JCM 17883 / MC-1), this protein is Small ribosomal subunit protein uS7.